Consider the following 708-residue polypeptide: Nicastrin (708 aa).

The N-terminal stretch at 1 to 34 (MATARGGSGPDPGSRGLLLLSFSVVLAGLCGGNS) is a signal peptide. Residues 35 to 668 (VERKIYIPLN…IFLIASKELE (634 aa)) lie on the Lumenal side of the membrane. 3 N-linked (GlcNAc...) asparagine glycosylation sites follow: Asn44, Asn54, and Asn128. Cys49 and Cys61 are joined by a disulfide. Cys139 and Cys158 are oxidised to a cystine. Asn186 and Asn203 each carry an N-linked (GlcNAc...) asparagine glycan. 2 disulfides stabilise this stretch: Cys194–Cys212 and Cys229–Cys247. 11 N-linked (GlcNAc...) asparagine glycosylation sites follow: Asn263, Asn386, Asn434, Asn463, Asn507, Asn529, Asn561, Asn572, Asn579, Asn593, and Asn611. Cysteines 585 and 619 form a disulfide. A helical transmembrane segment spans residues 669-689 (FITLIVGFSILVFSLIVTYCI). The Cytoplasmic portion of the chain corresponds to 690–708 (NAKADVLFVAPREPGAVSY).

Belongs to the nicastrin family. As to quaternary structure, component of the gamma-secretase complex. The functional gamma-secretase complex is composed of at least four polypeptides: a presenilin homodimer (PSEN1 or PSEN2), nicastrin (NCSTN), APH1 (APH1A or APH1B) and PEN2. Binds to proteolytic processed C-terminal fragments C83 and C99 of the amyloid precursor protein (APP). Interacts with PSEN1 and PSEN2. N-glycosylated.

Its subcellular location is the membrane. The protein resides in the cytoplasmic vesicle membrane. The protein localises to the melanosome. Its function is as follows. Essential subunit of the gamma-secretase complex, an endoprotease complex that catalyzes the intramembrane cleavage of integral membrane proteins such as Notch receptors and APP (amyloid-beta precursor protein). The gamma-secretase complex plays a role in Notch and Wnt signaling cascades and regulation of downstream processes via its role in processing key regulatory proteins, and by regulating cytosolic CTNNB1 levels. In Rattus norvegicus (Rat), this protein is Nicastrin (Ncstn).